The chain runs to 242 residues: MKLLAWSPVLLSSKKFPEENGKKFIPGSEIKEAIKDALVYYFLKKDKALNTKVKNYVKRHKRTSLRKFVREIEKMVFEAEKEFIESIEVPEKVYLSSEGIKEKVVEVYDLKRKDFKDYFKSEVFEGVAEFEVKANNYEKLRSACHSYAEALAHAELTLVRDHPIGEIFHKNLLSEMKNWEIPLRVGFWTTAPFGGRLFWFWGDKEIRNRIRRLYRLDIRPRSVIYVPSEKKTAGWTEVKKDA.

This is an uncharacterized protein from Aquifex aeolicus (strain VF5).